Here is a 1597-residue protein sequence, read N- to C-terminus: Glucosyltransferase-I (1597 aa).

Positions 1-38 are cleaved as a signal peptide; the sequence is MEKNERFKMHKVKKRWVTISVASATMLASALGASVASA. Positions 52 to 120 are disordered; sequence LTADQTTTNQ…QTTTNANEAK (69 aa). Residues 53–114 show a composition bias toward low complexity; sequence TADQTTTNQD…STDTAAQTTT (62 aa). Cell wall-binding repeat units lie at residues 157–176 and 178–197; these read MSNVKQVDGKYYYYDQDGNV and KNFAVSVGEKIYYFDETGAY. The segment at 200-1050 is catalytic; approximate; the sequence is TSKVEADKSG…DQASNKYLNV (851 aa). 22 Cell wall-binding repeats span residues 1089 to 1108, 1109 to 1128, 1130 to 1150, 1152 to 1172, 1173 to 1191, 1193 to 1214, 1216 to 1236, 1237 to 1256, 1258 to 1279, 1281 to 1301, 1302 to 1321, 1323 to 1343, 1344 to 1365, 1366 to 1380, 1415 to 1434, 1436 to 1457, 1459 to 1478, 1485 to 1505, 1508 to 1527, 1528 to 1547, 1549 to 1570, and 1572 to 1591; these read TDSFITEAGNLYYFGQDGYM, VTGAQNIKGSNYYFLANGAA, RNTVYTDAQGQNHYYGNDGKR, ENGYQQFGNDSWRYFKNGVMA, LGLTTVDGHVQYFDKDGVQ, KDKIIVTRDGKVRYFDQHNGNA, TNTFVADKTGHWYYLGKDGVA, VTGAQTVGKQHLYFEANGQQ, KGDFVTAKDGKLYFYDVDSGDM, TNTFIEDKAGNWFYLGKDGAA, VTGAQTIKGQKLYFKANGQQ, KGDIVKDADGKIRYYDAQTGE, QVFNKSVSVNGKTYYFGSDGTA, QTQANPKGQTFKDGS, LTGAQTIGNQRVYFKDNGHQ, KGQLVTGNDGKLRYYDANSGDQ, FNKSVTVNGKTYYFGSDGTA, KGQTFKDGSGVLRFYNLEGQY, GSGWYKNAQGQWLYVKDGKV, LTGLQTVGNQKVYFDKNGIQ, KGKAVRTSDGKVRYFDENSGSM, and TNQWKFVYGQYYYFGSDGAA. The interval 1099 to 1597 is glucan-binding; approximate; it reads LYYFGQDGYM…DGAAVYRGWN (499 aa).

The protein belongs to the glycosyl hydrolase 70 family.

It is found in the secreted. The enzyme catalyses [(1-&gt;6)-alpha-D-glucosyl](n) + sucrose = [(1-&gt;6)-alpha-D-glucosyl](n+1) + D-fructose. Its function is as follows. Production of extracellular glucans, that are thought to play a key role in the development of the dental plaque because of their ability to adhere to smooth surfaces and mediate the aggregation of bacterial cells and food debris. The polypeptide is Glucosyltransferase-I (gtfI) (Streptococcus downei (Streptococcus sobrinus)).